Consider the following 271-residue polypeptide: Aquaporin-2 (271 aa).

Residues 1 to 11 (MWELRSIAFSR) lie on the Cytoplasmic side of the membrane. Residues 12 to 32 (AVFAEFLATLLFVFFGLGSAL) form a helical membrane-spanning segment. The Extracellular segment spans residues 33–40 (NWPQALPS). Residues 41–59 (VLQIAMAFGLGIGTLVQAL) traverse the membrane as a helical segment. Over 60-64 (GHISG) the chain is Cytoplasmic. Positions 65–74 (AHINPAVTVA) form an intramembrane region, discontinuously helical. The short motif at 68–70 (NPA) is the NPA 1 element. The Cytoplasmic portion of the chain corresponds to 75-85 (CLVGCHVSVLR). Residues 86–107 (AAFYVAAQLLGAVAGAALLHEI) form a helical membrane-spanning segment. The Extracellular portion of the chain corresponds to 108–127 (TPADIRGDLAVNALSNSTTA). An N-linked (GlcNAc...) asparagine glycan is attached at asparagine 123. The chain crosses the membrane as a helical span at residues 128 to 148 (GQAVTVELFLTLQLVLCIFAS). The Cytoplasmic portion of the chain corresponds to 149–156 (TDERRGEN). Residues 157–176 (PGTPALSIGFSVALGHLLGI) traverse the membrane as a helical segment. The Extracellular portion of the chain corresponds to 177 to 180 (HYTG). The discontinuously helical intramembrane region spans 181–193 (CSMNPARSLAPAV). An NPA 2 motif is present at residues 184 to 186 (NPA). Residues 194 to 201 (VTGKFDDH) lie on the Extracellular side of the membrane. The helical transmembrane segment at 202–222 (WVFWIGPLVGAILGSLLYNYV) threads the bilayer. At 223–271 (LFPPAKSLSERLAVLKGLEPDTDWEEREVRRRQSVELHSPQSLPRGTKA) the chain is on the cytoplasmic side. Positions 248-271 (EREVRRRQSVELHSPQSLPRGTKA) are disordered. Serine 256 carries the post-translational modification Phosphoserine; by PKA. A compositionally biased stretch (polar residues) spans 261 to 271 (SPQSLPRGTKA).

The protein belongs to the MIP/aquaporin (TC 1.A.8) family. As to quaternary structure, homotetramer. Interacts with micropeptide MIAC; the interaction leads to a reduction of filamentous actin fibers and inhibition of the EREG/EGFR signaling pathway. In terms of processing, ser-256 phosphorylation is necessary and sufficient for expression at the apical membrane. Endocytosis is not phosphorylation-dependent. N-glycosylated. As to expression, expressed in collecting tubules in kidney medulla (at protein level). Detected in kidney.

The protein resides in the apical cell membrane. Its subcellular location is the basolateral cell membrane. It is found in the cell membrane. It localises to the cytoplasmic vesicle membrane. The protein localises to the golgi apparatus. The protein resides in the trans-Golgi network membrane. It catalyses the reaction H2O(in) = H2O(out). The catalysed reaction is glycerol(in) = glycerol(out). Its function is as follows. Forms a water-specific channel that provides the plasma membranes of renal collecting duct with high permeability to water, thereby permitting water to move in the direction of an osmotic gradient. Plays an essential role in renal water homeostasis. Could also be permeable to glycerol. The polypeptide is Aquaporin-2 (Homo sapiens (Human)).